Reading from the N-terminus, the 264-residue chain is Shikimate dehydrogenase (NADP(+)) (264 aa).

Shikimate-binding positions include 14–16 (SLS) and T59. K63 serves as the catalytic Proton acceptor. E75 serves as a coordination point for NADP(+). Shikimate-binding residues include N84 and D99. Residues 122 to 126 (GAGGA), 144 to 149 (NRTPSK), and I205 contribute to the NADP(+) site. Residue Y207 participates in shikimate binding. Residue G228 coordinates NADP(+).

The protein belongs to the shikimate dehydrogenase family. In terms of assembly, homodimer.

It carries out the reaction shikimate + NADP(+) = 3-dehydroshikimate + NADPH + H(+). Its pathway is metabolic intermediate biosynthesis; chorismate biosynthesis; chorismate from D-erythrose 4-phosphate and phosphoenolpyruvate: step 4/7. Involved in the biosynthesis of the chorismate, which leads to the biosynthesis of aromatic amino acids. Catalyzes the reversible NADPH linked reduction of 3-dehydroshikimate (DHSA) to yield shikimate (SA). This is Shikimate dehydrogenase (NADP(+)) from Pyrococcus abyssi (strain GE5 / Orsay).